The sequence spans 323 residues: tRNA U34 carboxymethyltransferase (323 aa).

Carboxy-S-adenosyl-L-methionine is bound by residues lysine 91, tryptophan 105, lysine 110, glycine 130, 152–154, 181–182, methionine 196, tyrosine 200, and arginine 315; these read DPT and IE.

The protein belongs to the class I-like SAM-binding methyltransferase superfamily. CmoB family. As to quaternary structure, homotetramer.

It carries out the reaction carboxy-S-adenosyl-L-methionine + 5-hydroxyuridine(34) in tRNA = 5-carboxymethoxyuridine(34) in tRNA + S-adenosyl-L-homocysteine + H(+). Functionally, catalyzes carboxymethyl transfer from carboxy-S-adenosyl-L-methionine (Cx-SAM) to 5-hydroxyuridine (ho5U) to form 5-carboxymethoxyuridine (cmo5U) at position 34 in tRNAs. The protein is tRNA U34 carboxymethyltransferase of Escherichia coli (strain SE11).